Reading from the N-terminus, the 339-residue chain is Ketol-acid reductoisomerase (NADP(+)) (339 aa).

One can recognise a KARI N-terminal Rossmann domain in the interval 1-182 (MRVYYDRDAD…GGGRAGIIET (182 aa)). Residues 24 to 27 (YGSQ), R48, S51, T53, and 83 to 86 (DELQ) each bind NADP(+). H108 is a catalytic residue. Residue G134 participates in NADP(+) binding. A KARI C-terminal knotted domain is found at 183-328 (TFREECETDL…ARLREMMPWI (146 aa)). Mg(2+) contacts are provided by D191, E195, E227, and E231. S252 contributes to the substrate binding site.

This sequence belongs to the ketol-acid reductoisomerase family. Mg(2+) is required as a cofactor.

It carries out the reaction (2R)-2,3-dihydroxy-3-methylbutanoate + NADP(+) = (2S)-2-acetolactate + NADPH + H(+). The catalysed reaction is (2R,3R)-2,3-dihydroxy-3-methylpentanoate + NADP(+) = (S)-2-ethyl-2-hydroxy-3-oxobutanoate + NADPH + H(+). Its pathway is amino-acid biosynthesis; L-isoleucine biosynthesis; L-isoleucine from 2-oxobutanoate: step 2/4. It functions in the pathway amino-acid biosynthesis; L-valine biosynthesis; L-valine from pyruvate: step 2/4. Involved in the biosynthesis of branched-chain amino acids (BCAA). Catalyzes an alkyl-migration followed by a ketol-acid reduction of (S)-2-acetolactate (S2AL) to yield (R)-2,3-dihydroxy-isovalerate. In the isomerase reaction, S2AL is rearranged via a Mg-dependent methyl migration to produce 3-hydroxy-3-methyl-2-ketobutyrate (HMKB). In the reductase reaction, this 2-ketoacid undergoes a metal-dependent reduction by NADPH to yield (R)-2,3-dihydroxy-isovalerate. The protein is Ketol-acid reductoisomerase (NADP(+)) of Parvibaculum lavamentivorans (strain DS-1 / DSM 13023 / NCIMB 13966).